Reading from the N-terminus, the 313-residue chain is GMP synthase [glutamine-hydrolyzing] subunit B (313 aa).

Residues 6–190 form the GMPS ATP-PPase domain; that stretch reads KVWEKFIEEK…LGLPEKIYNR (185 aa). ATP is bound at residue 33-39; it reads SGGVDSS.

Heterodimer composed of a glutamine amidotransferase subunit (A) and a GMP-binding subunit (B).

It carries out the reaction XMP + L-glutamine + ATP + H2O = GMP + L-glutamate + AMP + diphosphate + 2 H(+). It functions in the pathway purine metabolism; GMP biosynthesis; GMP from XMP (L-Gln route): step 1/1. Catalyzes the synthesis of GMP from XMP. This Pyrococcus furiosus (strain ATCC 43587 / DSM 3638 / JCM 8422 / Vc1) protein is GMP synthase [glutamine-hydrolyzing] subunit B (guaAB).